The chain runs to 212 residues: Calaxin (212 aa).

3 EF-hand domains span residues 65 to 100, 101 to 136, and 146 to 181; these read TDDM…FLRG, TLEE…SLLK, and GIKD…ETLL. Ca(2+) contacts are provided by Asp-78, Asp-80, Asp-82, Cys-84, Glu-89, Asp-114, Asn-116, Asp-118, Glu-125, Asp-159, Asp-161, Asp-163, Lys-165, and Asp-170.

As to quaternary structure, component of the outer dynein arm-docking complex along with ODAD1, ODAD2, ODAD3 and ODAD4. Expressed in trachea multiciliated cells.

The protein resides in the cytoplasm. It is found in the cytoskeleton. It localises to the cilium axoneme. Its subcellular location is the cell projection. The protein localises to the cilium. The protein resides in the flagellum. Its function is as follows. Component of the outer dynein arm-docking complex (ODA-DC) that mediates outer dynein arms (ODA) binding onto the doublet microtubule. Seems to regulate the assembly of both ODAs and their axonemal docking complex onto ciliary microtubules. Regulates ciliary and flagellar motility and is required for cilia-driven determination of body laterality. The sequence is that of Calaxin (CLXN) from Bos taurus (Bovine).